Consider the following 130-residue polypeptide: Large ribosomal subunit protein bL21 (130 aa).

The tract at residues 110–130 is disordered; the sequence is KTAAQPAADEAVAANEVDSEA. The span at 112-130 shows a compositional bias: low complexity; it reads AAQPAADEAVAANEVDSEA.

The protein belongs to the bacterial ribosomal protein bL21 family. Part of the 50S ribosomal subunit. Contacts protein L20.

Its function is as follows. This protein binds to 23S rRNA in the presence of protein L20. The protein is Large ribosomal subunit protein bL21 of Cyanothece sp. (strain PCC 7425 / ATCC 29141).